Here is a 427-residue protein sequence, read N- to C-terminus: MSNNQILFERAQKTIPGGVNSPVRAFRSVGGTPRFVARAQGPYFWDADGKQYIDYIGSWGPMIVGHVHPEVLDAVQKVLADGFSFGAPTEAEIEIAEEICKLVPSIEQVRMVSSGTEATMSALRLARGFTGRSRIVKFEGCYHGHADSLLVKAGSGLLTFGNPTSAGVPADIAKHTTVLEYNNVAALEEAFGAFGDEIAAVIVEPVAGNMNLVRGTPEFLNALRALCTKHGAVLIFDEVMCGFRVALGGAQAHYGIAADLTCLGKVIGGGMPAAAFGGRRDIMAHLAPLGGVYQAGTLSGNPIAVAAGLKTLQLIQAPGFYEALTAQTKRLADGLAAEARAAGVPFAADSIGAMFGLYFAERVPTSFAEVTKSDIERFNRFFHLMLDEGVYFAPSAYEAGFVSSTHDDAVIDATLAAARRAFAALAA.

K265 carries the N6-(pyridoxal phosphate)lysine modification.

It belongs to the class-III pyridoxal-phosphate-dependent aminotransferase family. HemL subfamily. Homodimer. It depends on pyridoxal 5'-phosphate as a cofactor.

It is found in the cytoplasm. The catalysed reaction is (S)-4-amino-5-oxopentanoate = 5-aminolevulinate. The protein operates within porphyrin-containing compound metabolism; protoporphyrin-IX biosynthesis; 5-aminolevulinate from L-glutamyl-tRNA(Glu): step 2/2. This chain is Glutamate-1-semialdehyde 2,1-aminomutase, found in Burkholderia multivorans (strain ATCC 17616 / 249).